Reading from the N-terminus, the 413-residue chain is Histidine--tRNA ligase (413 aa).

Belongs to the class-II aminoacyl-tRNA synthetase family. As to quaternary structure, homodimer.

It is found in the cytoplasm. The enzyme catalyses tRNA(His) + L-histidine + ATP = L-histidyl-tRNA(His) + AMP + diphosphate + H(+). The chain is Histidine--tRNA ligase from Ehrlichia canis (strain Jake).